We begin with the raw amino-acid sequence, 949 residues long: Translation initiation factor IF-2 (949 aa).

Disordered stretches follow at residues 61 to 122 (IQAN…PIIK), 139 to 159 (VENTPKAVSHSQIEKAKQKLQ), and 171 to 284 (LTQS…NKSH). Composition is skewed to basic and acidic residues over residues 112 to 122 (KKKEAPAPIIK) and 150 to 159 (QIEKAKQKLQ). Low complexity predominate over residues 174-190 (SNTNTTNNANSASNVSN). Over residues 191–208 (AKKEISEVKKQEQEIKRH) the composition is skewed to basic and acidic residues. Positions 209 to 220 (ENIKRRTGFRVI) are enriched in basic residues. Residues 249-264 (EDIKKEWQEKDKQETK) show a composition bias toward basic and acidic residues. One can recognise a tr-type G domain in the interval 448–617 (ERPPVVTIMG…LIQADIMELK (170 aa)). Positions 457–464 (GHVDHGKT) are G1. Residue 457-464 (GHVDHGKT) participates in GTP binding. Residues 482-486 (GITQH) are G2. Residues 503–506 (DTPG) form a G3 region. Residues 503–507 (DTPGH) and 557–560 (NKMD) contribute to the GTP site. Residues 557–560 (NKMD) form a G4 region. Positions 593-595 (SAK) are G5.

This sequence belongs to the TRAFAC class translation factor GTPase superfamily. Classic translation factor GTPase family. IF-2 subfamily.

It localises to the cytoplasm. One of the essential components for the initiation of protein synthesis. Protects formylmethionyl-tRNA from spontaneous hydrolysis and promotes its binding to the 30S ribosomal subunits. Also involved in the hydrolysis of GTP during the formation of the 70S ribosomal complex. The polypeptide is Translation initiation factor IF-2 (infB) (Helicobacter pylori (strain J99 / ATCC 700824) (Campylobacter pylori J99)).